Here is a 363-residue protein sequence, read N- to C-terminus: MAKVAKDLNPGVQKMSLGQQQSARGVPCLRCKGTCSGFEPHSWRKICKSCKCSQEDHFLSSDLEDDRKIGRLLMDSKYSTLTARVKGGDGIRIYKRNRMIMTNPIATGKDPTFDTITYEWAPPGVTQKLGLQYMELIPKEKQPVTGTEGAYYRRRQLMHQLPIYDQDPSRCRGLLESELKVMEEFVKQYKSEALGVGEVALPGQGGLPKEEGKQQEKPEGAETAAPTANGSLGDPSKEYVCELCKGVAPADSPVVYSDRAGYSKQWHPACFVCAKCSEPLVDLIYFWKDGAPWCGRHYCESLRPRCSGCDEIIFSEDYQRVEDLAWHRKHFVCEGCEQQLGGRAYIITKGQLLCPTCSKSKRT.

A Phosphoserine modification is found at Ser16. Positions 99–206 (MIMTNPIATG…GEVALPGQGG (108 aa)) constitute a PET domain. The tract at residues 200–233 (ALPGQGGLPKEEGKQQEKPEGAETAAPTANGSLG) is disordered. Over residues 208–220 (PKEEGKQQEKPEG) the composition is skewed to basic and acidic residues. LIM zinc-binding domains lie at 239 to 304 (YVCE…SLRP) and 305 to 363 (RCSG…SKRT).

Interacts with beta-dystroglycan. Interacts with GATA1, GATA4 and GATA6. In terms of tissue distribution, highly expressed in both skeletal muscle and cardiac muscle.

Its subcellular location is the cytoplasm. The protein resides in the nucleus. In terms of biological role, transcriptional cofactor that restricts GATA6 function by inhibiting DNA-binding, resulting in repression of GATA6 transcriptional activation of downstream target genes. Represses GATA6-mediated trans activation of lung- and cardiac tissue-specific promoters. Inhibits DNA-binding by GATA4 and GATA1 to the cTNC promoter. Plays a critical role in the development of cardiac hypertrophy via activation of calcineurin/nuclear factor of activated T-cells signaling pathway. The polypeptide is LIM and cysteine-rich domains protein 1 (LMCD1) (Sus scrofa (Pig)).